The sequence spans 600 residues: DNA repair and recombination protein mus-11 (600 aa).

Residues 148–152 (KRALR) mediate DNA binding. Positions 268 to 319 (LNPQAQQSRPLSRSGSTGSLNTRQQPQNSHQFTARAQSRPPQQQLNSNQSRP) are enriched in polar residues. Disordered stretches follow at residues 268–357 (LNPQ…AGAA) and 387–600 (APKP…QRLA). Low complexity-rich tracts occupy residues 325 to 343 (NNSSNANTPNNPQNYTTPQ) and 458 to 470 (ARSASGSFSRAGP). Residues 502 to 512 (GFSSSPSTNRG) are compositionally biased toward polar residues. 2 stretches are compositionally biased toward low complexity: residues 540-564 (SATTTTIAANTTAGSATGGNAAPSA) and 577-591 (ANASNATAAGAATSG).

The protein belongs to the RAD52 family. In terms of assembly, part of a complex that includes mei-3/rad51 and mus-11/rad52.

The protein localises to the nucleus. Functionally, involved in DNA double-strand break (DSB) repair and recombination. Promotes the annealing of complementary single-stranded DNA and by stimulation of the mei-3/rad51 recombinase. The chain is DNA repair and recombination protein mus-11 (mus-11) from Neurospora crassa (strain ATCC 24698 / 74-OR23-1A / CBS 708.71 / DSM 1257 / FGSC 987).